Reading from the N-terminus, the 548-residue chain is Chaperone Ric-8A (548 aa).

Disordered regions lie at residues 443–484 (DPGH…EGMT) and 517–548 (GKMT…SDTN).

It belongs to the synembryn family.

The protein resides in the cytoplasm. It localises to the cell cortex. Its function is as follows. Chaperone that specifically binds and folds nascent G alpha proteins prior to G protein heterotrimer formation, promoting their stability and activity: folds GNAI1, GNAO1, GNA13 and GNAQ. Does not fold G(s) G-alpha proteins GNAS nor GNAL. Also acts as a guanine nucleotide exchange factor (GEF) for G alpha proteins by stimulating exchange of bound GDP for free GTP. The polypeptide is Chaperone Ric-8A (ric8a) (Danio rerio (Zebrafish)).